Here is a 128-residue protein sequence, read N- to C-terminus: Centrosomal protein 15 (128 aa).

It is found in the cell projection. It localises to the cilium. Functionally, may play a role in ciliary assembly. In Homo sapiens (Human), this protein is Centrosomal protein 15.